A 1358-amino-acid polypeptide reads, in one-letter code: Probable aldehyde oxidase 1 (1358 aa).

Residues 4–91 (AAAVVAVNGE…HCAVTTSEGI (88 aa)) form the 2Fe-2S ferredoxin-type domain. The [2Fe-2S] cluster site is built by Cys-43, Cys-48, Cys-51, and Cys-73. The FAD-binding PCMH-type domain maps to 236–418 (AVTGDGCWFH…ISISIPDWCS (183 aa)). A disordered region spans residues 540–567 (KPENANNVPNGSCTTNGTTNGSAESTVD). Over residues 549-561 (NGSCTTNGTTNGS) the composition is skewed to low complexity.

It belongs to the xanthine dehydrogenase family. As to quaternary structure, aldehyde oxidases (AO) are homodimers and heterodimers of AO subunits. Requires [2Fe-2S] cluster as cofactor. FAD serves as cofactor. It depends on Mo-molybdopterin as a cofactor.

The enzyme catalyses an aldehyde + O2 + H2O = a carboxylate + H2O2 + H(+). The protein is Probable aldehyde oxidase 1 of Oryza sativa subsp. japonica (Rice).